The primary structure comprises 245 residues: Large ribosomal subunit protein eL29 (245 aa).

Positions 1 to 26 are enriched in basic residues; sequence MAKSKNHTTHNQSRKWHRNGIKKPRS. Disordered stretches follow at residues 1 to 33 and 114 to 245; these read MAKS…ESLK and RGLR…AKAP. Lysine 5 carries the N6-methyllysine modification. The residue at position 31 (serine 31) is a Phosphoserine. Lysine 33 bears the N6-acetyllysine mark. The span at 134–150 shows a compositional bias: low complexity; that stretch reads KGKVKAQIKAQAQAQIK. The segment covering 157 to 171 has biased composition (basic and acidic residues); it reads AQAETKPKAQAETKP. 2 stretches are compositionally biased toward low complexity: residues 172–226 and 234–245; these read KAQA…ATPA and PPKGAQPPAKAP.

The protein belongs to the eukaryotic ribosomal protein eL29 family. In terms of assembly, component of the large ribosomal subunit.

It is found in the cytoplasm. In terms of biological role, component of the large ribosomal subunit. The ribosome is a large ribonucleoprotein complex responsible for the synthesis of proteins in the cell. In Oryctolagus cuniculus (Rabbit), this protein is Large ribosomal subunit protein eL29 (RPL29).